Consider the following 298-residue polypeptide: 4-hydroxy-tetrahydrodipicolinate synthase (298 aa).

Thr48 serves as a coordination point for pyruvate. Catalysis depends on Tyr137, which acts as the Proton donor/acceptor. Lys166 (schiff-base intermediate with substrate) is an active-site residue. Ile207 is a pyruvate binding site.

It belongs to the DapA family. In terms of assembly, homotetramer; dimer of dimers.

The protein resides in the cytoplasm. It carries out the reaction L-aspartate 4-semialdehyde + pyruvate = (2S,4S)-4-hydroxy-2,3,4,5-tetrahydrodipicolinate + H2O + H(+). It participates in amino-acid biosynthesis; L-lysine biosynthesis via DAP pathway; (S)-tetrahydrodipicolinate from L-aspartate: step 3/4. Its function is as follows. Catalyzes the condensation of (S)-aspartate-beta-semialdehyde [(S)-ASA] and pyruvate to 4-hydroxy-tetrahydrodipicolinate (HTPA). This is 4-hydroxy-tetrahydrodipicolinate synthase from Campylobacter jejuni subsp. doylei (strain ATCC BAA-1458 / RM4099 / 269.97).